A 252-amino-acid polypeptide reads, in one-letter code: Urease accessory protein UreH (252 aa).

This sequence belongs to the UreD family. As to quaternary structure, ureH, UreF and UreG form a complex that acts as a GTP-hydrolysis-dependent molecular chaperone, activating the urease apoprotein by helping to assemble the nickel containing metallocenter of UreC. The UreE protein probably delivers the nickel.

The protein localises to the cytoplasm. Functionally, required for maturation of urease via the functional incorporation of the urease nickel metallocenter. The protein is Urease accessory protein UreH of Helicobacter hepaticus (strain ATCC 51449 / 3B1).